Here is a 363-residue protein sequence, read N- to C-terminus: MGVKDLLSRKTGVIVGDDVLRLFQHAQENVFAIPAIMVTSSSTGSALEAARDKSPIVLQTSNGAAYFAGKGKGVSNDGQSVAGSIAIAAAHYIRSQAPAYGIPVVLHTDHCAKKLLPWLDGMLDADECYSKLHNEPLFSSHMIDLSEESVEWNIETTAKYLKRAAPMKQWLEMEIGITGGEEDGVNNESVDNNSLYTQPEDIYTIYKTLSAISPYFSIAAGFGNVHGVYRGDIALRPLLRHLHNAKYDEQLKCLQDPLGFFVFHGGSGSSHQPATSITSEFAAKGRVDLEKVAYLPGTSSLVIAPKDYLMSPYGIPVVLHTDHCKYFDPRVQIREGLKHMSARVQEAKDDFNDSNQAKKLLPW.

Residue Ser-61 participates in D-glyceraldehyde 3-phosphate binding. Catalysis depends on Asp-109, which acts as the Proton donor. Positions 110, 144, 174, and 226 each coordinate Zn(2+). Position 227 (Gly-227) interacts with dihydroxyacetone phosphate. His-264 lines the Zn(2+) pocket. A dihydroxyacetone phosphate-binding site is contributed by 265–267; sequence GGS.

It belongs to the class II fructose-bisphosphate aldolase family. In terms of assembly, homodimer. It depends on Zn(2+) as a cofactor.

The enzyme catalyses beta-D-fructose 1,6-bisphosphate = D-glyceraldehyde 3-phosphate + dihydroxyacetone phosphate. It participates in carbohydrate degradation; glycolysis; D-glyceraldehyde 3-phosphate and glycerone phosphate from D-glucose: step 4/4. Catalyzes the aldol condensation of dihydroxyacetone phosphate (DHAP or glycerone-phosphate) with glyceraldehyde 3-phosphate (G3P) to form fructose 1,6-bisphosphate (FBP) in gluconeogenesis and the reverse reaction in glycolysis. The chain is Fructose-bisphosphate aldolase 2 (FBA2) from Paracoccidioides lutzii (strain ATCC MYA-826 / Pb01) (Paracoccidioides brasiliensis).